A 244-amino-acid polypeptide reads, in one-letter code: MNNSLSPKAIRELREETCNPLGAPQVTTDLSENIIMTSLDDLHNWARLSSLWPLLYGTACCFIEFAALIGSRFDFDRFGLVPRSSPRQADLLIVAGTVTMKMAPALVRLYEQMPEPKYVIAMGACTITGGMFSADSTTAVRGVDKLIPVDLYLPGCPPRPEAIFDAVIKLRKKVANESILERNKSEQTHRYLTVDHEMNLVFSENTGEYLNKKSEKSIESSKLNPVEESSENIYETNSIDEVIK.

Residues cysteine 60, cysteine 61, cysteine 125, and cysteine 156 each contribute to the [4Fe-4S] cluster site. A disordered region spans residues 213–244 (KSEKSIESSKLNPVEESSENIYETNSIDEVIK). Positions 231–244 (ENIYETNSIDEVIK) are enriched in polar residues.

The protein belongs to the complex I 20 kDa subunit family. In terms of assembly, NDH-1 can be composed of about 15 different subunits; different subcomplexes with different compositions have been identified which probably have different functions. [4Fe-4S] cluster serves as cofactor.

It is found in the cellular thylakoid membrane. The enzyme catalyses a plastoquinone + NADH + (n+1) H(+)(in) = a plastoquinol + NAD(+) + n H(+)(out). It carries out the reaction a plastoquinone + NADPH + (n+1) H(+)(in) = a plastoquinol + NADP(+) + n H(+)(out). NDH-1 shuttles electrons from an unknown electron donor, via FMN and iron-sulfur (Fe-S) centers, to quinones in the respiratory and/or the photosynthetic chain. The immediate electron acceptor for the enzyme in this species is believed to be plastoquinone. Couples the redox reaction to proton translocation, and thus conserves the redox energy in a proton gradient. Cyanobacterial NDH-1 also plays a role in inorganic carbon-concentration. This chain is NAD(P)H-quinone oxidoreductase subunit K, found in Prochlorococcus marinus subsp. pastoris (strain CCMP1986 / NIES-2087 / MED4).